The sequence spans 403 residues: G-protein coupled receptor family C group 5 member B (403 aa).

Positions 1–28 are cleaved as a signal peptide; the sequence is MFVASERKMRAHQVLTFLLLFVITSVAS. Residues 29-56 lie on the Extracellular side of the membrane; it reads ENASTSRGCGLDLLPQYVSLCDLDAIWG. The N-linked (GlcNAc...) asparagine glycan is linked to N30. The helical transmembrane segment at 57–77 threads the bilayer; the sequence is IVVEAVAGAGALITLLLMLIL. The Cytoplasmic portion of the chain corresponds to 78 to 94; it reads LVRLPFIKEKEKKSPVG. Residues 95-115 traverse the membrane as a helical segment; that stretch reads LHFLFLLGTLGLFGLTFAFII. The Extracellular portion of the chain corresponds to 116–126; that stretch reads QEDETICSVRR. A helical transmembrane segment spans residues 127 to 147; sequence FLWGVLFALCFSCLLSQAWRV. The Cytoplasmic portion of the chain corresponds to 148–162; it reads RRLVRHGTGPAGWQL. Residues 163-183 traverse the membrane as a helical segment; the sequence is VGLALCLMLVQVIIAVEWLVL. At 184–199 the chain is on the extracellular side; it reads TVLRDTRPACAYEPMD. The helical transmembrane segment at 200 to 220 threads the bilayer; the sequence is FVMALIYDMVLLVVTLGLALF. The Cytoplasmic portion of the chain corresponds to 221 to 234; it reads TLCGKFKRWKLNGA. A helical membrane pass occupies residues 235 to 255; sequence FLLITAFLSVLIWVAWMTMYL. Residues 256 to 271 lie on the Extracellular side of the membrane; it reads FGNVKLQQGDAWNDPT. Residues 272–292 form a helical membrane-spanning segment; that stretch reads LAITLAASGWVFVIFHAIPEI. Residues 293–403 lie on the Cytoplasmic side of the membrane; it reads HCTLLPALQE…PPSHTGRHLW (111 aa). Residues 349-371 form a disordered region; it reads GFPNGSLGKRPSGSLGKRPSAPF. S354 carries the phosphoserine modification.

The protein belongs to the G-protein coupled receptor 3 family. Expression is high in kidney, pancreas, and testis, medium in brain, heart, prostate, small intestine, and spleen, low in liver, placenta, skeletal muscle, colon, ovary, and thymus, and not detectable in lung and peripheral leukocyte. According to PubMed:10945465, highly expressed in most brain areas examined, with the highest levels observed in corpus callosum, caudate nucleus, putamen, substantia nigra, thalamus, hippocampus, and spinal cord as well as in dorsal root ganglia (DRG). Expressed in glia limitans, ependymal cells, astrocyte cell bodies, the perivascular region in astrocyte endfeet, but not in neurons. In the periphery, expression levels are relatively low, compared to the CNS, with the strongest expression detected in pancreas, testis, uterus, and stomach.

The protein resides in the cell membrane. The protein localises to the cytoplasmic vesicle membrane. G-protein coupled receptor involved in the regulation of cell volume. The sequence is that of G-protein coupled receptor family C group 5 member B (GPRC5B) from Homo sapiens (Human).